The primary structure comprises 225 residues: PKHD-type hydroxylase Smal_0990 (225 aa).

Residues 78-177 (KYLPPRFNRY…RVASFFWVQS (100 aa)) form the Fe2OG dioxygenase domain. Fe cation is bound by residues His-96, Asp-98, and His-158. Arg-168 is a 2-oxoglutarate binding site.

The cofactor is Fe(2+). It depends on L-ascorbate as a cofactor.

This is PKHD-type hydroxylase Smal_0990 from Stenotrophomonas maltophilia (strain R551-3).